The chain runs to 1050 residues: Nuclear pore complex-interacting protein family member B3 (1050 aa).

A helical transmembrane segment spans residues 63 to 87 (VIIAFPTSYKVVITLWIVYLWVSLL). 3 disordered regions span residues 241-262 (NRMGHQPPPPTQQHSITDNSLS), 290-574 (LTPL…NIKT), and 785-1050 (ERLR…RRLS). A compositionally biased stretch (polar residues) spans 252–262 (QQHSITDNSLS). Residues 349–359 (PLPPSALPSAP) show a composition bias toward pro residues. Basic and acidic residues-rich tracts occupy residues 406–416 (DNIKTPAERLR), 448–458 (DNIKTPAERLR), 490–500 (DNIKTPAERLR), 528–538 (DNIKTPAERLR), 820–830 (DNIKTPAERLR), 862–872 (DNIKTPAERLR), and 904–914 (DNIKTPAERLR).

This sequence belongs to the NPIP family.

It localises to the membrane. This is Nuclear pore complex-interacting protein family member B3 (NPIPB3) from Homo sapiens (Human).